Here is a 132-residue protein sequence, read N- to C-terminus: Seminal vesicle protein SVP-2 (132 aa).

The N-terminal stretch at 1–14 is a signal peptide; sequence HLALLLILENQASG. Basic and acidic residues predominate over residues 33–81; it reads HKEEVEESESSRGQDFDKRRFWEKDDPTGEHVSVRHEHLEKSHIRFKED. Disordered stretches follow at residues 33–104 and 113–132; these read HKEE…LKRH and VEDQ…MQRV. Residues 104-132 constitute a propeptide that is removed on maturation; that stretch reads HDAMEELVSVEDQALANGADPGKSNMQRV.

It to the SVP-1/-3/-4 precursor, particularly in regions where protein processing must occur.

It localises to the secreted. The sequence is that of Seminal vesicle protein SVP-2 from Cavia porcellus (Guinea pig).